Consider the following 374-residue polypeptide: DNA-directed RNA polymerase subunit alpha (374 aa).

The alpha N-terminal domain (alpha-NTD) stretch occupies residues 1 to 270 (MIFDEDSSSV…DQFQQFINFD (270 aa)). Positions 282–374 (KDVLPYDSNL…ESLSKQYSEE (93 aa)) are alpha C-terminal domain (alpha-CTD).

Belongs to the RNA polymerase alpha chain family. Homodimer. The RNAP catalytic core consists of 2 alpha, 1 beta, 1 beta' and 1 omega subunit. When a sigma factor is associated with the core the holoenzyme is formed, which can initiate transcription.

It carries out the reaction RNA(n) + a ribonucleoside 5'-triphosphate = RNA(n+1) + diphosphate. Its function is as follows. DNA-dependent RNA polymerase catalyzes the transcription of DNA into RNA using the four ribonucleoside triphosphates as substrates. This Ehrlichia ruminantium (strain Welgevonden) protein is DNA-directed RNA polymerase subunit alpha.